A 502-amino-acid polypeptide reads, in one-letter code: ATP synthase subunit alpha (502 aa).

G169–T176 contributes to the ATP binding site.

It belongs to the ATPase alpha/beta chains family. As to quaternary structure, F-type ATPases have 2 components, CF(1) - the catalytic core - and CF(0) - the membrane proton channel. CF(1) has five subunits: alpha(3), beta(3), gamma(1), delta(1), epsilon(1). CF(0) has three main subunits: a(1), b(2) and c(9-12). The alpha and beta chains form an alternating ring which encloses part of the gamma chain. CF(1) is attached to CF(0) by a central stalk formed by the gamma and epsilon chains, while a peripheral stalk is formed by the delta and b chains.

It localises to the cell membrane. It catalyses the reaction ATP + H2O + 4 H(+)(in) = ADP + phosphate + 5 H(+)(out). In terms of biological role, produces ATP from ADP in the presence of a proton gradient across the membrane. The alpha chain is a regulatory subunit. The sequence is that of ATP synthase subunit alpha from Exiguobacterium sp. (strain ATCC BAA-1283 / AT1b).